The sequence spans 319 residues: Ribonuclease Z (319 aa).

Residues His-62, His-64, Asp-66, His-67, His-145, Asp-216, and His-274 each coordinate Zn(2+). The active-site Proton acceptor is the Asp-66.

Belongs to the RNase Z family. In terms of assembly, homodimer. The cofactor is Zn(2+).

The enzyme catalyses Endonucleolytic cleavage of RNA, removing extra 3' nucleotides from tRNA precursor, generating 3' termini of tRNAs. A 3'-hydroxy group is left at the tRNA terminus and a 5'-phosphoryl group is left at the trailer molecule.. Zinc phosphodiesterase, which displays some tRNA 3'-processing endonuclease activity. Probably involved in tRNA maturation, by removing a 3'-trailer from precursor tRNA. This Synechococcus sp. (strain CC9605) protein is Ribonuclease Z.